Consider the following 357-residue polypeptide: 3-isopropylmalate dehydrogenase (357 aa).

76–89 (GPKWDALDSNIRPE) is a binding site for NAD(+). Substrate contacts are provided by R96, R106, R134, and D224. Mg(2+) is bound by residues D224, D248, and D252. Residue 282–294 (GSAPDIAGQGVAN) coordinates NAD(+).

It belongs to the isocitrate and isopropylmalate dehydrogenases family. LeuB type 1 subfamily. In terms of assembly, homodimer. The cofactor is Mg(2+). Mn(2+) is required as a cofactor.

It localises to the cytoplasm. It carries out the reaction (2R,3S)-3-isopropylmalate + NAD(+) = 4-methyl-2-oxopentanoate + CO2 + NADH. It participates in amino-acid biosynthesis; L-leucine biosynthesis; L-leucine from 3-methyl-2-oxobutanoate: step 3/4. In terms of biological role, catalyzes the oxidation of 3-carboxy-2-hydroxy-4-methylpentanoate (3-isopropylmalate) to 3-carboxy-4-methyl-2-oxopentanoate. The product decarboxylates to 4-methyl-2 oxopentanoate. The protein is 3-isopropylmalate dehydrogenase of Saccharophagus degradans (strain 2-40 / ATCC 43961 / DSM 17024).